The chain runs to 396 residues: Exodeoxyribonuclease 7 large subunit (396 aa).

Belongs to the XseA family. Heterooligomer composed of large and small subunits.

It localises to the cytoplasm. The catalysed reaction is Exonucleolytic cleavage in either 5'- to 3'- or 3'- to 5'-direction to yield nucleoside 5'-phosphates.. Its function is as follows. Bidirectionally degrades single-stranded DNA into large acid-insoluble oligonucleotides, which are then degraded further into small acid-soluble oligonucleotides. The protein is Exodeoxyribonuclease 7 large subunit of Clostridium tetani (strain Massachusetts / E88).